Reading from the N-terminus, the 453-residue chain is Homogentisate 1,2-dioxygenase (453 aa).

The span at 1–12 (MLEKAERQRKAA) shows a compositional bias: basic and acidic residues. Residues 1-43 (MLEKAERQRKAAPDQQRSAGYMPGFGNDFETESLPGSLPQGQN) form a disordered region. Histidine 306 (proton acceptor) is an active-site residue. Fe cation is bound by residues histidine 349 and glutamate 355. Homogentisate contacts are provided by tyrosine 364 and histidine 385. Histidine 385 provides a ligand contact to Fe cation.

It belongs to the homogentisate dioxygenase family. In terms of assembly, hexamer; dimer of trimers. It depends on Fe cation as a cofactor.

It carries out the reaction homogentisate + O2 = 4-maleylacetoacetate + H(+). It participates in amino-acid degradation; L-phenylalanine degradation; acetoacetate and fumarate from L-phenylalanine: step 4/6. Involved in the catabolism of homogentisate (2,5-dihydroxyphenylacetate or 2,5-OH-PhAc), a central intermediate in the degradation of phenylalanine and tyrosine. Catalyzes the oxidative ring cleavage of the aromatic ring of homogentisate to yield maleylacetoacetate. The polypeptide is Homogentisate 1,2-dioxygenase (Sinorhizobium medicae (strain WSM419) (Ensifer medicae)).